The following is a 144-amino-acid chain: MCHAREASPGTGEPEAAPRDNFPREAGSKRGIGAAFETRAQRFLERAGLALVARNVTVRGGEIDLVMRERDGTLVFVEVRARANSRYGGAAASIGARKRMRLLLAAHAFWARTGGANACRFDVVAFEGGRLVWLRDAFRADDAG.

Residues 1-28 (MCHAREASPGTGEPEAAPRDNFPREAGS) form a disordered region. The span at 16–28 (AAPRDNFPREAGS) shows a compositional bias: basic and acidic residues.

This sequence belongs to the UPF0102 family.

The chain is UPF0102 protein BPSL3274 from Burkholderia pseudomallei (strain K96243).